The chain runs to 571 residues: Quinone-dependent D-lactate dehydrogenase (571 aa).

Positions 42 to 213 (GQGDALAVVF…SKLDDDRIKD (172 aa)) constitute an FAD-binding PCMH-type domain. FAD contacts are provided by residues 76 to 80 (AANTG), 84 to 85 (GS), glycine 143, serine 150, glycine 160, and valine 262. The disordered stretch occupies residues 546–571 (RENDPTNSMNPGIGKTSKRKNWQEVE).

This sequence belongs to the quinone-dependent D-lactate dehydrogenase family. The cofactor is FAD.

It is found in the cell inner membrane. The enzyme catalyses (R)-lactate + a quinone = a quinol + pyruvate. With respect to regulation, inhibited by 2-hydroxy-3-butynoic acid, but not by p-chloromercuribenzoate, n-ethylmaleimide, or 5,5'-dithiobis(2-nitrobenzoic acid). Functionally, catalyzes the oxidation of D-lactate to pyruvate. Electrons derived from D-lactate oxidation are transferred to the ubiquinone/cytochrome electron transfer chain, where they may be used to provide energy for the active transport of a variety of amino acids and sugars across the membrane. In Escherichia coli (strain K12), this protein is Quinone-dependent D-lactate dehydrogenase.